The sequence spans 349 residues: GTP 3',8-cyclase (349 aa).

The Radical SAM core domain occupies 24 to 249; that stretch reads PFGRAVTYLR…KDMSYRTGGP (226 aa). R33 is a GTP binding site. [4Fe-4S] cluster-binding residues include C40 and C44. Position 46 (Y46) interacts with S-adenosyl-L-methionine. C47 contributes to the [4Fe-4S] cluster binding site. R82 contacts GTP. G86 is a binding site for S-adenosyl-L-methionine. T116 is a GTP binding site. S-adenosyl-L-methionine is bound at residue S140. K176 is a GTP binding site. M210 provides a ligand contact to S-adenosyl-L-methionine. [4Fe-4S] cluster-binding residues include C273 and C276. 278 to 280 contacts GTP; sequence RVR. A [4Fe-4S] cluster-binding site is contributed by C290.

This sequence belongs to the radical SAM superfamily. MoaA family. As to quaternary structure, monomer and homodimer. The cofactor is [4Fe-4S] cluster.

It carries out the reaction GTP + AH2 + S-adenosyl-L-methionine = (8S)-3',8-cyclo-7,8-dihydroguanosine 5'-triphosphate + 5'-deoxyadenosine + L-methionine + A + H(+). The protein operates within cofactor biosynthesis; molybdopterin biosynthesis. Functionally, catalyzes the cyclization of GTP to (8S)-3',8-cyclo-7,8-dihydroguanosine 5'-triphosphate. In Sinorhizobium medicae (strain WSM419) (Ensifer medicae), this protein is GTP 3',8-cyclase.